We begin with the raw amino-acid sequence, 438 residues long: Keratin, type I cytoskeletal 18 (438 aa).

Residues 4–83 (AVSSRSTVVS…TLSGNAVISN (80 aa)) form a head region. The segment at 84–119 (EKETMQDLNDRLSNYLETVRRLENANQQLEIQIREA) is coil 1A. Residues 84 to 395 (EKETMQDLND…HLLGGEDSDT (312 aa)) enclose the IF rod domain. The segment at 120-136 (MEKRGPSVRDYSNYEKI) is linker 1. The tract at residues 137–228 (IKELRDQIYD…KNHEDEVIAL (92 aa)) is coil 1B. The linker 12 stretch occupies residues 229–252 (RNQVNSCGVQVDLDAPKGTDLAEI). Residues 253-393 (MATLRAEYEA…YRHLLGGEDS (141 aa)) are coil 2. The tract at residues 394 to 438 (DTLSLQDALSAMKVSNVQTVQKIVVTTQKLVDGKVVEDSTVTETK) is tail.

This sequence belongs to the intermediate filament family. Heterotetramer of two type I and two type II keratins. Keratin-18 associates with keratin-8. Phosphorylated. Post-translationally, proteolytically cleaved by caspases during epithelial cell apoptosis. As to expression, expressed at low levels in skin.

When phosphorylated, plays a role in filament reorganization. This chain is Keratin, type I cytoskeletal 18, found in Protopterus aethiopicus (Marbled lungfish).